Reading from the N-terminus, the 1846-residue chain is Insulin-like receptor (1846 aa).

Asparagine 113, asparagine 180, and asparagine 364 each carry an N-linked (GlcNAc...) asparagine glycan. Intrachain disulfides connect cysteine 371–cysteine 386, cysteine 393–cysteine 401, cysteine 397–cysteine 410, cysteine 413–cysteine 422, and cysteine 426–cysteine 438. Asparagine 453 carries an N-linked (GlcNAc...) asparagine glycan. Intrachain disulfides connect cysteine 469-cysteine 483 and cysteine 486-cysteine 490. N-linked (GlcNAc...) asparagine glycosylation occurs at asparagine 518. Residues cysteine 615 and cysteine 646 are joined by a disulfide bond. 3 N-linked (GlcNAc...) asparagine glycosylation sites follow: asparagine 652, asparagine 671, and asparagine 696. 3 Fibronectin type-III domains span residues 775-869, 969-1067, and 1077-1179; these read TPDP…TMMG, KPSS…LKRT, and LNET…TPGF. A disordered region spans residues 944-980; it reads EKAENLGKAPKTLGGKKPLIHISKKKPSSSSTTSTPA. Basic residues predominate over residues 961 to 970; the sequence is PLIHISKKKP. Residues 970 to 1183 are Extracellular-facing; it reads PSSSSTTSTP…VMTPGFFTVE (214 aa). Residues 971-980 show a composition bias toward low complexity; it reads SSSSTTSTPA. N-linked (GlcNAc...) asparagine glycosylation is found at asparagine 1017, asparagine 1047, asparagine 1078, asparagine 1087, and asparagine 1093. A helical transmembrane segment spans residues 1184 to 1204; the sequence is IILGMLLVFLILMSIAGCIIY. The Cytoplasmic segment spans residues 1205 to 1846; it reads YYIQVRYGKK…IEDNEHHPLV (642 aa). Residues 1246-1528 form the Protein kinase domain; that stretch reads VVLGQQCGEG…LLAAEASPEF (283 aa). Residues 1252 to 1260 and lysine 1282 contribute to the ATP site; that span reads CGEGSFGKV. The Proton acceptor role is filled by aspartate 1388. Disordered regions lie at residues 1718–1742 and 1769–1826; these read ISSM…TNWS and QQQQ…IFNG. The segment covering 1726 to 1742 has biased composition (polar residues); the sequence is STGASSSSYGVPQTNWS. The segment covering 1808 to 1821 has biased composition (low complexity); it reads YRNNGSPSRNGNSR.

The protein belongs to the protein kinase superfamily. Tyr protein kinase family. Insulin receptor subfamily. Tetramer of 2 alpha and 2 beta chains linked by disulfide bonds. The alpha chains contribute to the formation of the ligand-binding domain, while the beta chains carry the kinase domain. Interacts (via cytoplasmic domain) with shc-1 (PID domain). Interacts (via kinase domain) with daf-18 (via C-terminus). In terms of assembly, interacts with casy-1; promoting axonal localization. It depends on Mg(2+) as a cofactor.

The protein localises to the membrane. Its subcellular location is the cell projection. The protein resides in the axon. It carries out the reaction L-tyrosyl-[protein] + ATP = O-phospho-L-tyrosyl-[protein] + ADP + H(+). With respect to regulation, autophosphorylation activates the kinase activity. Interaction with shc-1 may inhibit its activity. In terms of biological role, insulin receptor-like tyrosine kinase which regulates metabolism, controls longevity and prevents developmental arrest at the dauer stage. Binding of INS family members may either stimulate, or antagonize, association of the receptor with downstream mediators such as pdk-1 and age-1. Required for germline progenitor proliferation during larval development. Plays a role in maintaining gonad integrity in a daf-16/FOXO-dependent manner. Required for the response to environmental stimuli such as light, food, pheromone, and temperature. Negatively regulates resistance to UV and oxidative stress. In a daf-16/FOXO-dependent manner, plays a role in regulating the response to white light. Role in immune function and pathogen resistance. Negatively regulates autophagy. Regulates daf-18/PTEN protein levels. Plays a role in controlling seam cell development during the larval stages. Required for taste avoidance learning in the cell body of ASER gustatory neurons. Its function is as follows. Required for taste avoidance learning in axons of ASER gustatory neurons. This chain is Insulin-like receptor, found in Caenorhabditis elegans.